A 340-amino-acid chain; its full sequence is UDP-N-acetylenolpyruvoylglucosamine reductase (340 aa).

The region spanning 14-185 (HVEATARWLL…VAVEFNLPLL (172 aa)) is the FAD-binding PCMH-type domain. Residue arginine 162 is part of the active site. Serine 235 functions as the Proton donor in the catalytic mechanism. Residue glutamate 332 is part of the active site.

Belongs to the MurB family. Requires FAD as cofactor.

The protein localises to the cytoplasm. It carries out the reaction UDP-N-acetyl-alpha-D-muramate + NADP(+) = UDP-N-acetyl-3-O-(1-carboxyvinyl)-alpha-D-glucosamine + NADPH + H(+). It functions in the pathway cell wall biogenesis; peptidoglycan biosynthesis. Functionally, cell wall formation. The protein is UDP-N-acetylenolpyruvoylglucosamine reductase of Xanthomonas oryzae pv. oryzae (strain KACC10331 / KXO85).